Consider the following 88-residue polypeptide: Small ribosomal subunit protein uS15c (88 aa).

Belongs to the universal ribosomal protein uS15 family. As to quaternary structure, part of the 30S ribosomal subunit.

It is found in the plastid. The protein localises to the chloroplast. The polypeptide is Small ribosomal subunit protein uS15c (rps15) (Physcomitrium patens (Spreading-leaved earth moss)).